Consider the following 408-residue polypeptide: LL-diaminopimelate aminotransferase (408 aa).

Substrate contacts are provided by Y15 and G42. Pyridoxal 5'-phosphate is bound by residues Y72, 108 to 109 (SK), Y132, N187, Y218, and 246 to 248 (SFS). Substrate-binding residues include K109, Y132, and N187. The residue at position 249 (K249) is an N6-(pyridoxal phosphate)lysine. Pyridoxal 5'-phosphate contacts are provided by R257 and N292. Substrate is bound by residues N292 and R388.

It belongs to the class-I pyridoxal-phosphate-dependent aminotransferase family. LL-diaminopimelate aminotransferase subfamily. Homodimer. The cofactor is pyridoxal 5'-phosphate.

The enzyme catalyses (2S,6S)-2,6-diaminopimelate + 2-oxoglutarate = (S)-2,3,4,5-tetrahydrodipicolinate + L-glutamate + H2O + H(+). It functions in the pathway amino-acid biosynthesis; L-lysine biosynthesis via DAP pathway; LL-2,6-diaminopimelate from (S)-tetrahydrodipicolinate (aminotransferase route): step 1/1. Involved in the synthesis of meso-diaminopimelate (m-DAP or DL-DAP), required for both lysine and peptidoglycan biosynthesis. Catalyzes the direct conversion of tetrahydrodipicolinate to LL-diaminopimelate. In Prochlorococcus marinus (strain MIT 9313), this protein is LL-diaminopimelate aminotransferase.